The sequence spans 343 residues: Methionine import ATP-binding protein MetN 1 (343 aa).

The ABC transporter domain maps to 2–241; that stretch reads IKLSNITKVF…PKTPLAQKFI (240 aa). 38–45 lines the ATP pocket; it reads GASGAGKS.

Belongs to the ABC transporter superfamily. Methionine importer (TC 3.A.1.24) family. The complex is composed of two ATP-binding proteins (MetN), two transmembrane proteins (MetI) and a solute-binding protein (MetQ).

It is found in the cell inner membrane. The enzyme catalyses L-methionine(out) + ATP + H2O = L-methionine(in) + ADP + phosphate + H(+). It catalyses the reaction D-methionine(out) + ATP + H2O = D-methionine(in) + ADP + phosphate + H(+). In terms of biological role, part of the ABC transporter complex MetNIQ involved in methionine import. Responsible for energy coupling to the transport system. The sequence is that of Methionine import ATP-binding protein MetN 1 from Salmonella choleraesuis (strain SC-B67).